The chain runs to 441 residues: Histidine--tRNA ligase (441 aa).

This sequence belongs to the class-II aminoacyl-tRNA synthetase family. As to quaternary structure, homodimer.

It is found in the cytoplasm. It carries out the reaction tRNA(His) + L-histidine + ATP = L-histidyl-tRNA(His) + AMP + diphosphate + H(+). This is Histidine--tRNA ligase from Synechococcus sp. (strain WH7803).